We begin with the raw amino-acid sequence, 191 residues long: Putative glutathione-dependent formaldehyde-activating enzyme (191 aa).

The CENP-V/GFA domain maps to 20 to 166 (FPGGNLYCLC…FQSLGLQTYD (147 aa)). The Zn(2+) site is built by C27, C29, C48, C50, C53, C95, and C98.

Belongs to the Gfa family. Requires Zn(2+) as cofactor.

The enzyme catalyses S-(hydroxymethyl)glutathione = glutathione + formaldehyde. It functions in the pathway one-carbon metabolism; formaldehyde degradation; formate from formaldehyde (glutathione route): step 1/3. Its function is as follows. Catalyzes the condensation of formaldehyde and glutathione to S-hydroxymethylglutathione. This chain is Putative glutathione-dependent formaldehyde-activating enzyme, found in Aspergillus flavus (strain ATCC 200026 / FGSC A1120 / IAM 13836 / NRRL 3357 / JCM 12722 / SRRC 167).